The following is a 422-amino-acid chain: Isocitrate dehydrogenase [NADP] (422 aa).

T94 provides a ligand contact to NADP(+). S103, N105, R109, R119, and R143 together coordinate D-threo-isocitrate. D310 lines the Mg(2+) pocket. Residues 344-350 (HGTAPKY), N357, Y396, and R400 contribute to the NADP(+) site.

The protein belongs to the isocitrate and isopropylmalate dehydrogenases family. As to quaternary structure, homodimer. The cofactor is Mg(2+). It depends on Mn(2+) as a cofactor.

It catalyses the reaction D-threo-isocitrate + NADP(+) = 2-oxoglutarate + CO2 + NADPH. Catalyzes the oxidative decarboxylation of isocitrate to 2-oxoglutarate and carbon dioxide with the concomitant reduction of NADP(+). This is Isocitrate dehydrogenase [NADP] (icd) from Staphylococcus aureus (strain COL).